A 224-amino-acid chain; its full sequence is Large ribosomal subunit protein uL1 (224 aa).

This sequence belongs to the universal ribosomal protein uL1 family. In terms of assembly, part of the 50S ribosomal subunit.

In terms of biological role, binds directly to 23S rRNA. The L1 stalk is quite mobile in the ribosome, and is involved in E site tRNA release. Functionally, protein L1 is also a translational repressor protein, it controls the translation of the L11 operon by binding to its mRNA. The protein is Large ribosomal subunit protein uL1 of Borrelia hermsii (strain HS1 / DAH).